Reading from the N-terminus, the 300-residue chain is Tetrahydromethanopterin S-methyltransferase subunit E (300 aa).

6 consecutive transmembrane segments (helical) span residues 62-82, 86-106, 135-155, 158-178, 226-246, and 261-281; these read PVSYGLYVAAAGATAWALMGM, PILAIIVGSAVAALVHGAYSV, PIVGHGFIAVFCMLFAAYLAV, LGNPFPLPLVALIFGITVGAI, YFCSKLGGPLTGLAFGLIIFL, and LITKAAIAIVVGLIVVITTLL.

This sequence belongs to the MtrE family. The complex is composed of 8 subunits; MtrA, MtrB, MtrC, MtrD, MtrE, MtrF, MtrG and MtrH.

The protein resides in the cell membrane. It carries out the reaction 5-methyl-5,6,7,8-tetrahydromethanopterin + coenzyme M + 2 Na(+)(in) = 5,6,7,8-tetrahydromethanopterin + methyl-coenzyme M + 2 Na(+)(out). Its pathway is one-carbon metabolism; methanogenesis from CO(2); methyl-coenzyme M from 5,10-methylene-5,6,7,8-tetrahydromethanopterin: step 2/2. Functionally, part of a complex that catalyzes the formation of methyl-coenzyme M and tetrahydromethanopterin from coenzyme M and methyl-tetrahydromethanopterin. This is an energy-conserving, sodium-ion translocating step. In Methanococcus aeolicus (strain ATCC BAA-1280 / DSM 17508 / OCM 812 / Nankai-3), this protein is Tetrahydromethanopterin S-methyltransferase subunit E.